Reading from the N-terminus, the 428-residue chain is 3-phosphoshikimate 1-carboxyvinyltransferase (428 aa).

3-phosphoshikimate is bound by residues Lys22, Ser23, and Arg27. Lys22 is a binding site for phosphoenolpyruvate. Phosphoenolpyruvate-binding residues include Gly96 and Arg124. Residues Ser170, Ser171, Gln172, Ser198, Asp314, Asn337, and Lys341 each contribute to the 3-phosphoshikimate site. A phosphoenolpyruvate-binding site is contributed by Gln172. Asp314 acts as the Proton acceptor in catalysis. Arg345, Arg387, and Lys412 together coordinate phosphoenolpyruvate.

It belongs to the EPSP synthase family. As to quaternary structure, monomer.

It is found in the cytoplasm. The enzyme catalyses 3-phosphoshikimate + phosphoenolpyruvate = 5-O-(1-carboxyvinyl)-3-phosphoshikimate + phosphate. It functions in the pathway metabolic intermediate biosynthesis; chorismate biosynthesis; chorismate from D-erythrose 4-phosphate and phosphoenolpyruvate: step 6/7. Functionally, catalyzes the transfer of the enolpyruvyl moiety of phosphoenolpyruvate (PEP) to the 5-hydroxyl of shikimate-3-phosphate (S3P) to produce enolpyruvyl shikimate-3-phosphate and inorganic phosphate. In Vibrio vulnificus (strain YJ016), this protein is 3-phosphoshikimate 1-carboxyvinyltransferase.